The sequence spans 452 residues: Serine incorporator 2 (452 aa).

Helical transmembrane passes span 5–25 (LGAC…PCIL), 41–61 (FFTV…SPGV), 96–116 (AVYR…LLMV), 131–151 (GFWF…FYIP), 158–178 (IWFY…LLLL), 205–225 (LFFF…LLFV), 236–256 (GKVF…VAIL), 266–286 (SGLL…WLAL), 319–339 (WDAP…FISL), 387–407 (FFHL…TNWY), and 426–446 (ICAS…PLLL).

It belongs to the TDE1 family.

Its subcellular location is the cell membrane. The catalysed reaction is a 1,2-diacyl-sn-glycero-3-phospho-L-serine(in) = a 1,2-diacyl-sn-glycero-3-phospho-L-serine(out). It catalyses the reaction a 1,2-diacyl-sn-glycero-3-phosphocholine(in) = a 1,2-diacyl-sn-glycero-3-phosphocholine(out). It carries out the reaction a 1,2-diacyl-sn-glycero-3-phosphoethanolamine(in) = a 1,2-diacyl-sn-glycero-3-phosphoethanolamine(out). Its function is as follows. Non-ATP-dependent, non-specific lipid transporter for phosphatidylserine, phosphatidylcholine, and phosphatidylethanolamine. Functions as a scramblase that flips lipids in both directions across the membrane. In contrast to SERINC3 and SERINC5, has no effect on gammaretrovirus particles infectivity. The polypeptide is Serine incorporator 2 (SERINC2) (Bos taurus (Bovine)).